A 511-amino-acid chain; its full sequence is Chromosomal replication initiator protein DnaA (511 aa).

The domain I, interacts with DnaA modulators stretch occupies residues 1-87; that stretch reads MSVELWQQCV…IGSKRSSAPR (87 aa). Residues 87-174 form a domain II region; the sequence is RAAPNAPLAA…QVEGALKHTS (88 aa). Positions 133–160 are disordered; that stretch reads VATHDEPSRDSFDPMAGASSQQAPARAE. The span at 134-144 shows a compositional bias: basic and acidic residues; it reads ATHDEPSRDSF. The segment at 175–391 is domain III, AAA+ region; sequence YLNRTFTFEN…GALKRVIAHS (217 aa). ATP-binding residues include G219, G221, K222, and T223. The domain IV, binds dsDNA stretch occupies residues 392-511; the sequence is HFMGRDITIE…YKNLLRTLTT (120 aa).

It belongs to the DnaA family. In terms of assembly, oligomerizes as a right-handed, spiral filament on DNA at oriC.

The protein localises to the cytoplasm. Its function is as follows. Plays an essential role in the initiation and regulation of chromosomal replication. ATP-DnaA binds to the origin of replication (oriC) to initiate formation of the DNA replication initiation complex once per cell cycle. Binds the DnaA box (a 9 base pair repeat at the origin) and separates the double-stranded (ds)DNA. Forms a right-handed helical filament on oriC DNA; dsDNA binds to the exterior of the filament while single-stranded (ss)DNA is stabiized in the filament's interior. The ATP-DnaA-oriC complex binds and stabilizes one strand of the AT-rich DNA unwinding element (DUE), permitting loading of DNA polymerase. After initiation quickly degrades to an ADP-DnaA complex that is not apt for DNA replication. Binds acidic phospholipids. In Pseudomonas syringae pv. tomato (strain ATCC BAA-871 / DC3000), this protein is Chromosomal replication initiator protein DnaA.